Consider the following 208-residue polypeptide: Putative archaetidylserine decarboxylase proenzyme (208 aa).

Serine 172 serves as the catalytic Schiff-base intermediate with substrate; via pyruvic acid. Serine 172 is subject to Pyruvic acid (Ser); by autocatalysis.

It belongs to the phosphatidylserine decarboxylase family. PSD-A subfamily. In terms of assembly, heterodimer of a large membrane-associated beta subunit and a small pyruvoyl-containing alpha subunit. Requires pyruvate as cofactor. Post-translationally, is synthesized initially as an inactive proenzyme. Formation of the active enzyme involves a self-maturation process in which the active site pyruvoyl group is generated from an internal serine residue via an autocatalytic post-translational modification. Two non-identical subunits are generated from the proenzyme in this reaction, and the pyruvate is formed at the N-terminus of the alpha chain, which is derived from the carboxyl end of the proenzyme. The post-translation cleavage follows an unusual pathway, termed non-hydrolytic serinolysis, in which the side chain hydroxyl group of the serine supplies its oxygen atom to form the C-terminus of the beta chain, while the remainder of the serine residue undergoes an oxidative deamination to produce ammonia and the pyruvoyl prosthetic group on the alpha chain.

The protein localises to the cell membrane. It carries out the reaction archaetidylserine + H(+) = archaetidylethanolamine + CO2. Its function is as follows. Catalyzes the formation of archaetidylethanolamine (PtdEtn) from archaetidylserine (PtdSer). This Methanosarcina acetivorans (strain ATCC 35395 / DSM 2834 / JCM 12185 / C2A) protein is Putative archaetidylserine decarboxylase proenzyme.